A 265-amino-acid polypeptide reads, in one-letter code: Neutrophil elastase (265 aa).

The signal sequence occupies residues 1 to 26; it reads MALGRLSSRTLAAMLLALFLGGPALA. The Peptidase S1 domain maps to 29-247; sequence IVGGRPARPH…FADWINSIIR (219 aa). Cys-54 and Cys-70 are oxidised to a cystine. Residues His-69 and Asp-116 each act as charge relay system in the active site. Residues Asn-123 and Asn-172 are each glycosylated (N-linked (GlcNAc...) asparagine). Cystine bridges form between Cys-150-Cys-208, Cys-180-Cys-187, and Cys-198-Cys-223. Ser-202 (charge relay system) is an active-site residue.

The protein belongs to the peptidase S1 family. Elastase subfamily. Interacts with NOTCH2NL.

It catalyses the reaction Hydrolysis of proteins, including elastin. Preferential cleavage: Val-|-Xaa &gt; Ala-|-Xaa.. In terms of biological role, serine protease that modifies the functions of natural killer cells, monocytes and granulocytes. Inhibits C5a-dependent neutrophil enzyme release and chemotaxis. Promotes blood coagulation. Through the activation of the platelet fibrinogen receptor integrin alpha-IIb/beta-3, potentiates platelet aggregation induced by a threshold concentration of cathepsin G (CTSG). Cleaves and thus inactivates tissue factor pathway inhibitor (TFPI). Capable of killing E.coli; probably digests outer membrane protein A (ompA) in E.coli. This is Neutrophil elastase (Elane) from Mus musculus (Mouse).